Reading from the N-terminus, the 537-residue chain is Chaperonin GroEL (537 aa).

Residues 29-32 (TLGP), 86-90 (DGTTT), Gly413, 477-479 (NAA), and Asp493 contribute to the ATP site.

This sequence belongs to the chaperonin (HSP60) family. As to quaternary structure, forms a cylinder of 14 subunits composed of two heptameric rings stacked back-to-back. Interacts with the co-chaperonin GroES.

It is found in the cytoplasm. It catalyses the reaction ATP + H2O + a folded polypeptide = ADP + phosphate + an unfolded polypeptide.. Together with its co-chaperonin GroES, plays an essential role in assisting protein folding. The GroEL-GroES system forms a nano-cage that allows encapsulation of the non-native substrate proteins and provides a physical environment optimized to promote and accelerate protein folding. This Parascardovia denticolens (Bifidobacterium denticolens) protein is Chaperonin GroEL.